A 318-amino-acid chain; its full sequence is Type II methyltransferase M.HaeII (318 aa).

Residues 4 to 304 form the SAM-dependent MTase C5-type domain; it reads YKTIDLFAGI…GSMINSLNMA (301 aa). Cys73 is an active-site residue.

It belongs to the class I-like SAM-binding methyltransferase superfamily. C5-methyltransferase family.

The enzyme catalyses a 2'-deoxycytidine in DNA + S-adenosyl-L-methionine = a 5-methyl-2'-deoxycytidine in DNA + S-adenosyl-L-homocysteine + H(+). Its function is as follows. A methylase, recognizes the double-stranded sequence 5'-RGCGCY-3', methylates C-? on both strands, and protects the DNA from cleavage by the HaeII endonuclease. The sequence is that of Type II methyltransferase M.HaeII (haeIIM) from Haemophilus aegyptius.